A 392-amino-acid chain; its full sequence is LL-diaminopimelate aminotransferase (392 aa).

The substrate site is built by Tyr13 and Gly38. Pyridoxal 5'-phosphate is bound by residues Tyr67, 102–103, Tyr127, Asn177, Tyr208, and 236–238; these read SK and SCS. Lys103, Tyr127, and Asn177 together coordinate substrate. Lys239 carries the N6-(pyridoxal phosphate)lysine modification. Arg247 lines the pyridoxal 5'-phosphate pocket. Position 366 (Arg366) interacts with substrate.

Belongs to the class-I pyridoxal-phosphate-dependent aminotransferase family. LL-diaminopimelate aminotransferase subfamily. In terms of assembly, homodimer. Pyridoxal 5'-phosphate serves as cofactor.

It catalyses the reaction (2S,6S)-2,6-diaminopimelate + 2-oxoglutarate = (S)-2,3,4,5-tetrahydrodipicolinate + L-glutamate + H2O + H(+). It functions in the pathway amino-acid biosynthesis; L-lysine biosynthesis via DAP pathway; LL-2,6-diaminopimelate from (S)-tetrahydrodipicolinate (aminotransferase route): step 1/1. In terms of biological role, involved in the synthesis of meso-diaminopimelate (m-DAP or DL-DAP), required for both lysine and peptidoglycan biosynthesis. Catalyzes the direct conversion of tetrahydrodipicolinate to LL-diaminopimelate. Can also use m-DAP instead of LL-DAP as the amino-group donor. The protein is LL-diaminopimelate aminotransferase of Gloeobacter violaceus (strain ATCC 29082 / PCC 7421).